The primary structure comprises 76 residues: Small ribosomal subunit protein bS18 (76 aa).

The protein belongs to the bacterial ribosomal protein bS18 family. Part of the 30S ribosomal subunit. Forms a tight heterodimer with protein bS6.

Its function is as follows. Binds as a heterodimer with protein bS6 to the central domain of the 16S rRNA, where it helps stabilize the platform of the 30S subunit. This Xanthomonas euvesicatoria pv. vesicatoria (strain 85-10) (Xanthomonas campestris pv. vesicatoria) protein is Small ribosomal subunit protein bS18.